We begin with the raw amino-acid sequence, 103 residues long: A-type ATP synthase subunit F (103 aa).

The protein belongs to the V-ATPase F subunit family. Has multiple subunits with at least A(3), B(3), C, D, E, F, H, I and proteolipid K(x).

The protein localises to the cell membrane. Its function is as follows. Component of the A-type ATP synthase that produces ATP from ADP in the presence of a proton gradient across the membrane. The chain is A-type ATP synthase subunit F from Pyrococcus furiosus (strain ATCC 43587 / DSM 3638 / JCM 8422 / Vc1).